We begin with the raw amino-acid sequence, 452 residues long: UPF0210 protein Hore_14430 (452 aa).

It belongs to the UPF0210 family. In terms of assembly, homodimer.

In Halothermothrix orenii (strain H 168 / OCM 544 / DSM 9562), this protein is UPF0210 protein Hore_14430.